The following is a 494-amino-acid chain: Flap endonuclease 1 (494 aa).

Positions methionine 1–arginine 106 are N-domain. Aspartate 34 contributes to the Mg(2+) binding site. Positions 47 and 72 each coordinate DNA. The Mg(2+) site is built by aspartate 88, glutamate 160, glutamate 162, aspartate 181, and aspartate 183. The I-domain stretch occupies residues serine 124 to tyrosine 253. Residue glutamate 160 participates in DNA binding. DNA is bound by residues glycine 231 and aspartate 233. Aspartate 233 is a binding site for Mg(2+). The interaction with PCNA stretch occupies residues isoleucine 330–leucine 338. Disordered regions lie at residues proline 341–threonine 382 and leucine 395–threonine 426. A compositionally biased stretch (basic and acidic residues) spans aspartate 408–threonine 426.

It belongs to the XPG/RAD2 endonuclease family. FEN1 subfamily. In terms of assembly, interacts with PCNA. Three molecules of FEN1 bind to one PCNA trimer with each molecule binding to one PCNA monomer. PCNA stimulates the nuclease activity without altering cleavage specificity. Mg(2+) is required as a cofactor. Post-translationally, phosphorylated. Phosphorylation upon DNA damage induces relocalization to the nuclear plasma.

It is found in the nucleus. Its subcellular location is the nucleolus. The protein resides in the nucleoplasm. It localises to the mitochondrion. Functionally, structure-specific nuclease with 5'-flap endonuclease and 5'-3' exonuclease activities involved in DNA replication and repair. During DNA replication, cleaves the 5'-overhanging flap structure that is generated by displacement synthesis when DNA polymerase encounters the 5'-end of a downstream Okazaki fragment. It enters the flap from the 5'-end and then tracks to cleave the flap base, leaving a nick for ligation. Also involved in the long patch base excision repair (LP-BER) pathway, by cleaving within the apurinic/apyrimidinic (AP) site-terminated flap. Acts as a genome stabilization factor that prevents flaps from equilibrating into structures that lead to duplications and deletions. Also possesses 5'-3' exonuclease activity on nicked or gapped double-stranded DNA, and exhibits RNase H activity. Also involved in replication and repair of rDNA and in repairing mitochondrial DNA. The sequence is that of Flap endonuclease 1 from Theileria parva (East coast fever infection agent).